The following is a 127-amino-acid chain: Large ribosomal subunit protein bL20 (127 aa).

The protein belongs to the bacterial ribosomal protein bL20 family.

In terms of biological role, binds directly to 23S ribosomal RNA and is necessary for the in vitro assembly process of the 50S ribosomal subunit. It is not involved in the protein synthesizing functions of that subunit. In Renibacterium salmoninarum (strain ATCC 33209 / DSM 20767 / JCM 11484 / NBRC 15589 / NCIMB 2235), this protein is Large ribosomal subunit protein bL20.